The following is a 440-amino-acid chain: ATP-dependent protease ATPase subunit HslU (440 aa).

Residues V18, 60–65 (GVGKTE), D254, E319, and R391 each bind ATP.

This sequence belongs to the ClpX chaperone family. HslU subfamily. A double ring-shaped homohexamer of HslV is capped on each side by a ring-shaped HslU homohexamer. The assembly of the HslU/HslV complex is dependent on binding of ATP.

It localises to the cytoplasm. In terms of biological role, ATPase subunit of a proteasome-like degradation complex; this subunit has chaperone activity. The binding of ATP and its subsequent hydrolysis by HslU are essential for unfolding of protein substrates subsequently hydrolyzed by HslV. HslU recognizes the N-terminal part of its protein substrates and unfolds these before they are guided to HslV for hydrolysis. The sequence is that of ATP-dependent protease ATPase subunit HslU from Cellvibrio japonicus (strain Ueda107) (Pseudomonas fluorescens subsp. cellulosa).